The following is a 273-amino-acid chain: 2,3,4,5-tetrahydropyridine-2,6-dicarboxylate N-succinyltransferase (273 aa).

2 residues coordinate substrate: Arg-104 and Asp-141.

This sequence belongs to the transferase hexapeptide repeat family. As to quaternary structure, homotrimer.

The protein resides in the cytoplasm. It carries out the reaction (S)-2,3,4,5-tetrahydrodipicolinate + succinyl-CoA + H2O = (S)-2-succinylamino-6-oxoheptanedioate + CoA. It functions in the pathway amino-acid biosynthesis; L-lysine biosynthesis via DAP pathway; LL-2,6-diaminopimelate from (S)-tetrahydrodipicolinate (succinylase route): step 1/3. The sequence is that of 2,3,4,5-tetrahydropyridine-2,6-dicarboxylate N-succinyltransferase from Thioalkalivibrio sulfidiphilus (strain HL-EbGR7).